A 418-amino-acid polypeptide reads, in one-letter code: Somatostatin receptor type 3 (418 aa).

A disordered region spans residues 1–21; that stretch reads MDMLHPSSVSTTSEPENASSA. The Extracellular segment spans residues 1-43; it reads MDMLHPSSVSTTSEPENASSAWPPDATLGNVSAGPSPAGLAVS. Polar residues predominate over residues 7–20; it reads SSVSTTSEPENASS. 2 N-linked (GlcNAc...) asparagine glycosylation sites follow: N17 and N30. The helical transmembrane segment at 44-69 threads the bilayer; it reads GVLIPLVYLVVCVVGLLGNSLVIYVV. Topologically, residues 70-79 are cytoplasmic; the sequence is LRHTASPSVT. Residues 80-101 traverse the membrane as a helical segment; sequence NVYILNLALADELFMLGLPFLA. The Extracellular segment spans residues 102-116; that stretch reads AQNALSYWPFGSLMC. An intrachain disulfide couples C116 to C191. Residues 117–138 form a helical membrane-spanning segment; the sequence is RLVMAVDGINQFTSIFCLTVMS. The Cytoplasmic portion of the chain corresponds to 139–161; that stretch reads VDRYLAVVHPTRSARWRTAPVAR. Residues 162–181 form a helical membrane-spanning segment; the sequence is TVSAAVWVASAVVVLPVVVF. Over 182–205 the chain is Extracellular; that stretch reads SGVPRGMSTCHMQWPEPAAAWRAG. A helical membrane pass occupies residues 206 to 231; sequence FIIYTAALGFFGPLLVICLCYLLIVV. At 232 to 257 the chain is on the cytoplasmic side; the sequence is KVRSAGRRVWAPSCQRRRRSERRVTR. A helical transmembrane segment spans residues 258–279; sequence MVVAVVALFVLCWMPFYVLNIV. The Extracellular portion of the chain corresponds to 280–293; it reads NVVCPLPEEPAFFG. A helical membrane pass occupies residues 294–316; it reads LYFLVVALPYANSCANPILYGFL. At 317–418 the chain is on the cytoplasmic side; the sequence is SYRFKQGFRR…KSSTMRISYL (102 aa). Phosphoserine occurs at positions 332 and 337. Residues 335–418 are disordered; that stretch reads VRSQEPTVGP…KSSTMRISYL (84 aa). A Phosphothreonine modification is found at T348. Positions 348-360 are enriched in acidic residues; sequence TEEEDEEEEDGEE. Residues 361–371 show a composition bias toward basic and acidic residues; that stretch reads SREGGKGKEMN. 2 stretches are compositionally biased toward polar residues: residues 373–385 and 395–418; these read RVSQITQPGTSGQ and KEQQLLPQEASTGEKSSTMRISYL.

The protein belongs to the G-protein coupled receptor 1 family. As to quaternary structure, homodimer and heterodimer with SSTR2. Heterodimerization with SSTR2 inactivates SSTR3 receptor function. Phosphorylated. Phosphorylation increases upon somatostatin binding. In terms of tissue distribution, brain, pituitary and pancreas.

The protein localises to the cell membrane. Functionally, receptor for somatostatin-14 and -28. This receptor is coupled via pertussis toxin sensitive G proteins to inhibition of adenylyl cyclase. The sequence is that of Somatostatin receptor type 3 (SSTR3) from Homo sapiens (Human).